A 932-amino-acid polypeptide reads, in one-letter code: Glycine dehydrogenase (decarboxylating) (932 aa).

Residue Lys-685 is modified to N6-(pyridoxal phosphate)lysine.

This sequence belongs to the GcvP family. As to quaternary structure, the glycine cleavage system is composed of four proteins: P, T, L and H. It depends on pyridoxal 5'-phosphate as a cofactor.

The enzyme catalyses N(6)-[(R)-lipoyl]-L-lysyl-[glycine-cleavage complex H protein] + glycine + H(+) = N(6)-[(R)-S(8)-aminomethyldihydrolipoyl]-L-lysyl-[glycine-cleavage complex H protein] + CO2. In terms of biological role, the glycine cleavage system catalyzes the degradation of glycine. The P protein binds the alpha-amino group of glycine through its pyridoxal phosphate cofactor; CO(2) is released and the remaining methylamine moiety is then transferred to the lipoamide cofactor of the H protein. The sequence is that of Glycine dehydrogenase (decarboxylating) from Brucella suis (strain ATCC 23445 / NCTC 10510).